A 210-amino-acid chain; its full sequence is Neurotrophin-4 (210 aa).

Residues 1–24 (MLPLPSCSLPILLLFLLPSVPIES) form the signal peptide. The propeptide occupies 25-80 (QPPPSTLPPFLAPEWDLLSPRVVLSRGAPAGPPLLFLLEAGAFRESAGAPANRSRR). A glycan (N-linked (GlcNAc...) asparagine) is linked at asparagine 76. Intrachain disulfides connect cysteine 97-cysteine 170, cysteine 141-cysteine 199, and cysteine 158-cysteine 201.

Belongs to the NGF-beta family. In terms of tissue distribution, highest levels in prostate, lower levels in thymus, placenta, and skeletal muscle. Expressed in embryonic and adult tissues.

It is found in the secreted. Functionally, target-derived survival factor for peripheral sensory sympathetic neurons. May promote ameloblast differentiation and subsequent reduction in proliferation of ameloblasts. The chain is Neurotrophin-4 (NTF4) from Homo sapiens (Human).